The chain runs to 554 residues: Glucose-6-phosphate isomerase (554 aa).

E359 (proton donor) is an active-site residue. Catalysis depends on residues H390 and K518.

The protein belongs to the GPI family.

The protein resides in the cytoplasm. It catalyses the reaction alpha-D-glucose 6-phosphate = beta-D-fructose 6-phosphate. It participates in carbohydrate biosynthesis; gluconeogenesis. Its pathway is carbohydrate degradation; glycolysis; D-glyceraldehyde 3-phosphate and glycerone phosphate from D-glucose: step 2/4. In terms of biological role, catalyzes the reversible isomerization of glucose-6-phosphate to fructose-6-phosphate. In Pseudomonas entomophila (strain L48), this protein is Glucose-6-phosphate isomerase.